Consider the following 147-residue polypeptide: Transcriptional regulator FurA (147 aa).

The segment at 1 to 85 (MSSIPDYAEQ…GSVARYESRV (85 aa)) is DNA-binding. Zn(2+) is bound by residues His-34 and Glu-82. The segment at 86–147 (GDNHHHIVCR…SISDTSRSHP (62 aa)) is dimerization. Fe cation contacts are provided by Asp-87 and His-89. Positions 91, 94, 97, and 102 each coordinate Zn(2+). Residue Glu-109 coordinates Fe cation.

It belongs to the Fur family. In terms of assembly, homodimer.

Its subcellular location is the cytoplasm. Its function is as follows. Represses transcription of the catalase-peroxidase gene katG and its own transcription by binding to the promoter region in a redox-dependent manner. The chain is Transcriptional regulator FurA (furA) from Mycobacterium bovis (strain ATCC BAA-935 / AF2122/97).